Consider the following 464-residue polypeptide: MGLNKQDLYIYRKQYGVNLGAWFCAERWINDFLFTGEGSSELEAVSGNVKAHGIDKARENFEAHWKSWIGIEDFSYMKQHLVNSVRIPLGYWSLGNDELVKGTPFEPYAEVYRNSLHILCEKIQEAGSLSIGVLLDFHGVYGGGNCDGHSGTSSGKAEFYEKQEYQDRTVEAVKFLSSKIGQFENVIGIQVINEPIWGQYDVLANFYQKARSVVPSYLPVYIGDGWDKDHWVNWVNDHESEGFYVVDHHSYFCFGGELCHAPPKLITRRLDTGEEYGKTKLSNIVIGEWSCTLSQESWSQTKLHDKRRRDFGEAQLNQYLNYCGGCFFWTYKFLHGKGGDWDFRSVVEDKVINYPPPPPTENKAMPALLEQSRDQNFGGHCYYWDQKQHDHPYEHDLYVKGWNQAWEDYIEFLQHGAMIGFPRAWTQKRMTSISSASAWEYRDGMNAAWLHLERMGFLNPFRHP.

Belongs to the glycosyl hydrolase 5 (cellulase A) family.

The enzyme catalyses Successive hydrolysis of beta-D-glucose units from the non-reducing ends of (1-&gt;3)-beta-D-glucans, releasing alpha-glucose.. The polypeptide is Glucan 1,3-beta-glucosidase 3 (exg3) (Schizosaccharomyces pombe (strain 972 / ATCC 24843) (Fission yeast)).